Here is a 283-residue protein sequence, read N- to C-terminus: 4-diphosphocytidyl-2-C-methyl-D-erythritol kinase (283 aa).

Lys10 is an active-site residue. An ATP-binding site is contributed by 99–109 (PMGGGLGGGSS). Asp141 is a catalytic residue.

It belongs to the GHMP kinase family. IspE subfamily. In terms of assembly, homodimer.

It catalyses the reaction 4-CDP-2-C-methyl-D-erythritol + ATP = 4-CDP-2-C-methyl-D-erythritol 2-phosphate + ADP + H(+). Its pathway is isoprenoid biosynthesis; isopentenyl diphosphate biosynthesis via DXP pathway; isopentenyl diphosphate from 1-deoxy-D-xylulose 5-phosphate: step 3/6. Catalyzes the phosphorylation of the position 2 hydroxy group of 4-diphosphocytidyl-2C-methyl-D-erythritol. This Salmonella gallinarum (strain 287/91 / NCTC 13346) protein is 4-diphosphocytidyl-2-C-methyl-D-erythritol kinase.